The chain runs to 603 residues: Phosphomethylpyrimidine synthase (603 aa).

Residues asparagine 224, methionine 253, tyrosine 282, histidine 318, 338–340, 379–382, and glutamate 418 contribute to the substrate site; these read SRG and DGLR. Histidine 422 serves as a coordination point for Zn(2+). Substrate is bound at residue tyrosine 445. Zn(2+) is bound at residue histidine 486. [4Fe-4S] cluster is bound by residues cysteine 566, cysteine 569, and cysteine 574.

The protein belongs to the ThiC family. In terms of assembly, homodimer. The cofactor is [4Fe-4S] cluster.

The catalysed reaction is 5-amino-1-(5-phospho-beta-D-ribosyl)imidazole + S-adenosyl-L-methionine = 4-amino-2-methyl-5-(phosphooxymethyl)pyrimidine + CO + 5'-deoxyadenosine + formate + L-methionine + 3 H(+). The protein operates within cofactor biosynthesis; thiamine diphosphate biosynthesis. Functionally, catalyzes the synthesis of the hydroxymethylpyrimidine phosphate (HMP-P) moiety of thiamine from aminoimidazole ribotide (AIR) in a radical S-adenosyl-L-methionine (SAM)-dependent reaction. The protein is Phosphomethylpyrimidine synthase of Xylella fastidiosa (strain Temecula1 / ATCC 700964).